The chain runs to 467 residues: FK506-binding protein 4 (467 aa).

Disordered stretches follow at residues 64–163 and 208–357; these read KATG…GDDD and GNFV…KPTS. 3 stretches are compositionally biased toward acidic residues: residues 71–80, 147–163, and 213–254; these read DDDDEEEDEY, SDEE…GDDD, and PEDD…DELD. Basic and acidic residues-rich tracts occupy residues 271–287 and 312–332; these read APKL…RPAE and QKVE…DKKV. The region spanning 381–467 is the PPIase FKBP-type domain; sequence GDRVGMRYIG…IFDVKLLEIK (87 aa).

This sequence belongs to the FKBP-type PPIase family. FKBP3/4 subfamily. As to quaternary structure, binds to histones H3 and H4.

It is found in the nucleus. The enzyme catalyses [protein]-peptidylproline (omega=180) = [protein]-peptidylproline (omega=0). Inhibited by both FK506 and rapamycin. In terms of biological role, PPIase that acts as a histone chaperone. Histone proline isomerase that increases the rate of cis-trans isomerization at prolines on the histone H3 N-terminal tail. Proline isomerization influences H3 methylation thereby regulating gene expression. This is FK506-binding protein 4 (fkr-4) from Neurospora crassa (strain ATCC 24698 / 74-OR23-1A / CBS 708.71 / DSM 1257 / FGSC 987).